Here is a 543-residue protein sequence, read N- to C-terminus: Splicing factor U2af large subunit B (543 aa).

Over residues 1–10 the composition is skewed to gly residues; the sequence is MADDNGGGGD. A disordered region spans residues 1 to 171; it reads MADDNGGGGD…IPTPSQLPGS (171 aa). 2 stretches are compositionally biased toward basic and acidic residues: residues 17 to 78 and 88 to 114; these read VRPE…DRDR and EHRDRPDDHDRHRSRDSERRRDRERDG. Over residues 115–126 the composition is skewed to basic residues; sequence HRRHRSRSRSRS. RRM domains lie at 207-290, 327-405, and 446-532; these read RRVY…RPTD, DRIF…RANQ, and QVVT…YPEN.

It belongs to the splicing factor SR family.

The protein localises to the nucleus. Necessary for the splicing of pre-mRNA. This is Splicing factor U2af large subunit B (U2AF65B) from Triticum aestivum (Wheat).